A 203-amino-acid polypeptide reads, in one-letter code: Probable GTP-binding protein EngB (203 aa).

The region spanning 22–195 is the EngB-type G domain; that stretch reads GIPEIALAGR…WEEIVNQYNQ (174 aa). GTP is bound by residues 30–37, 57–61, 75–78, 142–145, and 174–176; these read GRSNVGKS, GKTRT, DLPG, TKAD, and VSS. S37 and T59 together coordinate Mg(2+).

Belongs to the TRAFAC class TrmE-Era-EngA-EngB-Septin-like GTPase superfamily. EngB GTPase family. Requires Mg(2+) as cofactor.

Necessary for normal cell division and for the maintenance of normal septation. In Clostridioides difficile (strain 630) (Peptoclostridium difficile), this protein is Probable GTP-binding protein EngB.